We begin with the raw amino-acid sequence, 336 residues long: MGRGKKMSKPGDGRSGDVPDTGRTGGTNENHPKINGEVAHLGQPKIYSFMSPTKSPSARPPLQEENSVAHHESKCPGKPLTETRKKAEVEKKRISSGTELSVKPSEQRETECNSIGEFLDPKQEQTDVRRNIALPPADKLNHQKMVKDKPLRRKAQRKKSPNRKLTDYYPVRRSCRKSKTELESEEKKRIDELIQTGKEEGMKMDMITGKGRGVIATRDFQRGEFVVEYHGDLIEITDAKRREATYAQDSNTGCYMYYFQYLNKTYCIDATRETGRLGRLINHSKSGNCHTKLHNINNVPHLILVASRDINVGEELLYDYGDRRKSSLEAHPWLKN.

Residues 1–112 (MGRGKKMSKP…KPSEQRETEC (112 aa)) are disordered. Over residues 67 to 93 (SVAHHESKCPGKPLTETRKKAEVEKKR) the composition is skewed to basic and acidic residues. The SET domain maps to 200–321 (EGMKMDMITG…VGEELLYDYG (122 aa)). S-adenosyl-L-methionine contacts are provided by residues 210 to 212 (KGR), Tyr-255, and 282 to 283 (NH).

It belongs to the class V-like SAM-binding methyltransferase superfamily. Histone-lysine methyltransferase family. PR/SET subfamily.

It localises to the nucleus. It is found in the chromosome. It carries out the reaction L-lysyl(20)-[histone H4] + S-adenosyl-L-methionine = N(6)-methyl-L-lysyl(20)-[histone H4] + S-adenosyl-L-homocysteine + H(+). It catalyses the reaction L-lysyl-[protein] + S-adenosyl-L-methionine = N(6)-methyl-L-lysyl-[protein] + S-adenosyl-L-homocysteine + H(+). Functionally, protein-lysine N-methyltransferase that monomethylates both histones and non-histone proteins. Specifically monomethylates 'Lys-20' of histone H4 (H4K20me1). H4K20me1 is enriched during mitosis and represents a specific tag for epigenetic transcriptional repression. Mainly functions in euchromatin regions, thereby playing a central role in the silencing of euchromatic genes. Required for cell proliferation, probably by contributing to the maintenance of proper higher-order structure of DNA during mitosis. Involved in chromosome condensation and proper cytokinesis. Nucleosomes are preferred as substrate compared to free histones. Mediates monomethylation of p53/TP53 at 'Lys-382', leading to repress p53/TP53-target genes. Plays a negative role in TGF-beta response regulation and a positive role in cell migration. In Xenopus tropicalis (Western clawed frog), this protein is N-lysine methyltransferase KMT5A.